The following is a 221-amino-acid chain: ATP synthase subunit delta (221 aa).

The span at 1-13 (MGPVPEEHQRESE) shows a compositional bias: basic and acidic residues. The segment at 1-31 (MGPVPEEHQRESETVASNGANESGAAVTGIP) is disordered.

This sequence belongs to the ATPase delta chain family. As to quaternary structure, F-type ATPases have 2 components, F(1) - the catalytic core - and F(0) - the membrane proton channel. F(1) has five subunits: alpha(3), beta(3), gamma(1), delta(1), epsilon(1). F(0) has three main subunits: a(1), b(2) and c(10-14). The alpha and beta chains form an alternating ring which encloses part of the gamma chain. F(1) is attached to F(0) by a central stalk formed by the gamma and epsilon chains, while a peripheral stalk is formed by the delta and b chains.

The protein localises to the cell inner membrane. F(1)F(0) ATP synthase produces ATP from ADP in the presence of a proton or sodium gradient. F-type ATPases consist of two structural domains, F(1) containing the extramembraneous catalytic core and F(0) containing the membrane proton channel, linked together by a central stalk and a peripheral stalk. During catalysis, ATP synthesis in the catalytic domain of F(1) is coupled via a rotary mechanism of the central stalk subunits to proton translocation. In terms of biological role, this protein is part of the stalk that links CF(0) to CF(1). It either transmits conformational changes from CF(0) to CF(1) or is implicated in proton conduction. This Granulibacter bethesdensis (strain ATCC BAA-1260 / CGDNIH1) protein is ATP synthase subunit delta.